Reading from the N-terminus, the 187-residue chain is Nucleoside-triphosphatase THEP1 (187 aa).

ATP contacts are provided by residues 9–16 (GRPGVGKT) and 100–107 (LIAIDEIG).

Belongs to the THEP1 NTPase family.

It catalyses the reaction a ribonucleoside 5'-triphosphate + H2O = a ribonucleoside 5'-diphosphate + phosphate + H(+). Has nucleotide phosphatase activity towards ATP, GTP, CTP, TTP and UTP. May hydrolyze nucleoside diphosphates with lower efficiency. This Hyperthermus butylicus (strain DSM 5456 / JCM 9403 / PLM1-5) protein is Nucleoside-triphosphatase THEP1.